The sequence spans 98 residues: MLEQQPAQNPLTVSMLNAQAQQVNKPLRDNVKAALKNYLSQLNGEDPTELYELVLSEIEHPMLDMVMQYTRGNQTRAATMLGINRGTLRKKLKKYGMG.

A DNA-binding region (H-T-H motif) is located at residues 74–93 (QTRAATMLGINRGTLRKKLK).

The protein belongs to the transcriptional regulatory Fis family. As to quaternary structure, homodimer.

Activates ribosomal RNA transcription. Plays a direct role in upstream activation of rRNA promoters. This Haemophilus ducreyi (strain 35000HP / ATCC 700724) protein is DNA-binding protein Fis.